The sequence spans 392 residues: Selenide, water dikinase 1 (392 aa).

Cys31 is an active-site residue. ATP contacts are provided by residues Lys32, 67–69 (GMD), Asp87, Asp110, and 161–164 (GGQT). Mg(2+) is bound at residue Asp69. Asp110 provides a ligand contact to Mg(2+). Asp265 contributes to the Mg(2+) binding site. Thr387 is subject to Phosphothreonine.

The protein belongs to the selenophosphate synthase 1 family. Class II subfamily. As to quaternary structure, homodimer. Requires Mg(2+) as cofactor.

It localises to the cell membrane. The protein resides in the nucleus membrane. It carries out the reaction hydrogenselenide + ATP + H2O = selenophosphate + AMP + phosphate + 2 H(+). Synthesizes selenophosphate from selenide and ATP. The protein is Selenide, water dikinase 1 (sephs1) of Danio rerio (Zebrafish).